The following is an 83-amino-acid chain: Large ribosomal subunit protein eL31 (83 aa).

The protein belongs to the eukaryotic ribosomal protein eL31 family.

The chain is Large ribosomal subunit protein eL31 from Methanococcus maripaludis (strain DSM 14266 / JCM 13030 / NBRC 101832 / S2 / LL).